The sequence spans 146 residues: Hemoglobin subunit beta (146 aa).

At Val-1 the chain carries N-acetylvaline. Residues 2–146 form the Globin domain; the sequence is HLTAAEKSAI…VANALAHKYH (145 aa). His-63 serves as a coordination point for heme b. The residue at position 82 (Lys-82) is an N6-acetyllysine. His-92 serves as a coordination point for heme b. At Cys-93 the chain carries S-nitrosocysteine. An N6-acetyllysine modification is found at Lys-144.

This sequence belongs to the globin family. In terms of assembly, heterotetramer of two alpha chains and two beta chains. Red blood cells.

Functionally, involved in oxygen transport from the lung to the various peripheral tissues. The protein is Hemoglobin subunit beta (HBB) of Cavia porcellus (Guinea pig).